The chain runs to 155 residues: Ribosomal RNA large subunit methyltransferase H (155 aa).

S-adenosyl-L-methionine is bound by residues G104 and L123 to L128.

It belongs to the RNA methyltransferase RlmH family. As to quaternary structure, homodimer.

It is found in the cytoplasm. It catalyses the reaction pseudouridine(1915) in 23S rRNA + S-adenosyl-L-methionine = N(3)-methylpseudouridine(1915) in 23S rRNA + S-adenosyl-L-homocysteine + H(+). Functionally, specifically methylates the pseudouridine at position 1915 (m3Psi1915) in 23S rRNA. The protein is Ribosomal RNA large subunit methyltransferase H of Marinomonas sp. (strain MWYL1).